A 180-amino-acid polypeptide reads, in one-letter code: Large ribosomal subunit protein uL6 (180 aa).

The protein belongs to the universal ribosomal protein uL6 family. Part of the 50S ribosomal subunit.

In terms of biological role, this protein binds to the 23S rRNA, and is important in its secondary structure. It is located near the subunit interface in the base of the L7/L12 stalk, and near the tRNA binding site of the peptidyltransferase center. This Clostridium botulinum (strain Eklund 17B / Type B) protein is Large ribosomal subunit protein uL6.